A 380-amino-acid chain; its full sequence is Flap endonuclease 1 (380 aa).

Positions 1-104 (MGIQGLAKLI…GELAKRSERR (104 aa)) are N-domain. The residue at position 19 (arginine 19) is a Symmetric dimethylarginine; by PRMT5. Aspartate 34 provides a ligand contact to Mg(2+). DNA is bound by residues arginine 47 and arginine 70. At lysine 80 the chain carries N6-acetyllysine. Position 86 (aspartate 86) interacts with Mg(2+). A symmetric dimethylarginine; by PRMT5 mark is found at arginine 100 and arginine 104. The interval 122 to 253 (EVEKFTKRLV…KRAVDLIQKH (132 aa)) is I-domain. 4 residues coordinate Mg(2+): glutamate 158, glutamate 160, aspartate 179, and aspartate 181. Position 158 (glutamate 158) interacts with DNA. Serine 187 carries the post-translational modification Phosphoserine; by CDK2. At arginine 192 the chain carries Symmetric dimethylarginine; by PRMT5. Serine 197 bears the Phosphoserine mark. DNA-binding residues include glycine 231 and aspartate 233. Aspartate 233 serves as a coordination point for Mg(2+). Residues serine 255, serine 293, and serine 335 each carry the phosphoserine modification. Residues 327–380 (RLSKSRQGSTQGRLDDFFKVTGSLSSAKRKEPEPKGAAKKKAKTGAAGKFKRGK) are disordered. A Phosphothreonine modification is found at threonine 336. The interval 336-344 (TQGRLDDFF) is interaction with PCNA. Residues lysine 354, lysine 375, lysine 377, and lysine 380 each carry the N6-acetyllysine modification. Over residues 363 to 380 (AAKKKAKTGAAGKFKRGK) the composition is skewed to basic residues.

Belongs to the XPG/RAD2 endonuclease family. FEN1 subfamily. As to quaternary structure, interacts with PCNA. Three molecules of FEN1 bind to one PCNA trimer with each molecule binding to one PCNA monomer. PCNA stimulates the nuclease activity without altering cleavage specificity. The C-terminal domain binds EP300; can bind simultaneously to both PCNA and EP300. Interacts with DDX11; this interaction is direct and increases flap endonuclease activity of FEN1. Interacts with WDR4; regulating its endonuclease activity. Interacts with POLB. Requires Mg(2+) as cofactor. Post-translationally, acetylated by EP300. Acetylation inhibits both endonuclease and exonuclease activity. Acetylation also reduces DNA-binding activity but does not affect interaction with PCNA or EP300. In terms of processing, phosphorylation upon DNA damage induces relocalization to the nuclear plasma. Phosphorylation at Ser-187 by CDK2 occurs during late S-phase and results in dissociation from PCNA. Methylation at Arg-192 by PRMT5 impedes Ser-187 phosphorylation and increases interaction with PCNA.

It localises to the nucleus. Its subcellular location is the nucleolus. The protein localises to the nucleoplasm. It is found in the mitochondrion. Functionally, structure-specific nuclease with 5'-flap endonuclease and 5'-3' exonuclease activities involved in DNA replication and repair. During DNA replication, cleaves the 5'-overhanging flap structure that is generated by displacement synthesis when DNA polymerase encounters the 5'-end of a downstream Okazaki fragment. It enters the flap from the 5'-end and then tracks to cleave the flap base, leaving a nick for ligation. Also involved in the long patch base excision repair (LP-BER) pathway, by cleaving within the apurinic/apyrimidinic (AP) site-terminated flap. Acts as a genome stabilization factor that prevents flaps from equilibrating into structures that lead to duplications and deletions. Also possesses 5'-3' exonuclease activity on nicked or gapped double-stranded DNA, and exhibits RNase H activity. Also involved in replication and repair of rDNA and in repairing mitochondrial DNA. The polypeptide is Flap endonuclease 1 (Bos taurus (Bovine)).